Consider the following 176-residue polypeptide: Large ribosomal subunit protein bL28m (176 aa).

The transit peptide at 1-8 (MASKLLRK) directs the protein to the mitochondrion.

The protein belongs to the bacterial ribosomal protein bL28 family. In terms of assembly, component of the mitochondrial large ribosomal subunit (mt-LSU). Mature yeast 74S mitochondrial ribosomes consist of a small (37S) and a large (54S) subunit. The 37S small subunit contains a 15S ribosomal RNA (15S mt-rRNA) and at least 32 different proteins. The 54S large subunit contains a 21S rRNA (21S mt-rRNA) and at least 45 different proteins.

It is found in the cytoplasm. The protein localises to the mitochondrion. Its function is as follows. Component of the mitochondrial ribosome (mitoribosome), a dedicated translation machinery responsible for the synthesis of mitochondrial genome-encoded proteins, including at least some of the essential transmembrane subunits of the mitochondrial respiratory chain. The mitoribosomes are attached to the mitochondrial inner membrane and translation products are cotranslationally integrated into the membrane. The polypeptide is Large ribosomal subunit protein bL28m (mrpl24) (Schizosaccharomyces pombe (strain 972 / ATCC 24843) (Fission yeast)).